A 543-amino-acid chain; its full sequence is Zinc finger protein 34 (543 aa).

The region spanning 14–87 (VTFEDVAVFL…DMHGAEQPSV (74 aa)) is the KRAB domain. The tract at residues 84–151 (QPSVDGSAHG…PGEQRGPRLV (68 aa)) is disordered. The span at 124-147 (EPGEVHERVREPEGRLDRPGEQRG) shows a compositional bias: basic and acidic residues. 12 consecutive C2H2-type zinc fingers follow at residues 179–201 (HKCD…KRVH), 234–256 (YYCG…QRLH), 262–284 (YKCE…RRMH), 290–312 (YRCD…QRIH), 318–340 (YKCS…QRIH), 346–368 (YKCS…RRTH), 374–396 (YECK…QRIH), 402–424 (YKCN…QRSH), 430–452 (YECN…QRIH), 458–480 (YKCS…QRSH), 486–508 (YKCA…RRIH), and 514–536 (YTCG…QRIH).

It belongs to the krueppel C2H2-type zinc-finger protein family.

The protein localises to the nucleus. Functionally, may be involved in transcriptional regulation. In Bos taurus (Bovine), this protein is Zinc finger protein 34 (ZNF34).